A 314-amino-acid polypeptide reads, in one-letter code: MAFLEDGNHTAVTEFVLFGLTDDPVLRVILFIIFLCIYLVNVSGNLSTILLIRVSSQLHHPMYFFLSHLASVDVGYSSTVTPKMLANFLLERSTISYLGCTIQLFSGAFVGTLECFLLATMAYDRFIAICNPLLYSTKMSTQVCIQLLVGSYIGGFLNASSFLLSFFPLLFCGPNRVNHYSCDLTPLIELSCSGSNVPIVPASFCSAFVIIVTVSVIAISYTYILITILKMRSTEGRQKAFSTCTSHLTAVTLYYGTVTFIYVMPKSSYSTDQNKVVSVFYTVVIPMLNPIIYSLRNNEIKGALKRQLARKIFS.

Topologically, residues 1–28 (MAFLEDGNHTAVTEFVLFGLTDDPVLRV) are extracellular. A glycan (N-linked (GlcNAc...) asparagine) is linked at Asn-8. A helical transmembrane segment spans residues 29-49 (ILFIIFLCIYLVNVSGNLSTI). Topologically, residues 50–57 (LLIRVSSQ) are cytoplasmic. The chain crosses the membrane as a helical span at residues 58–78 (LHHPMYFFLSHLASVDVGYSS). Residues 79–102 (TVTPKMLANFLLERSTISYLGCTI) lie on the Extracellular side of the membrane. Residues Cys-100 and Cys-192 are joined by a disulfide bond. Residues 103-123 (QLFSGAFVGTLECFLLATMAY) traverse the membrane as a helical segment. Residues 124–136 (DRFIAICNPLLYS) are Cytoplasmic-facing. The helical transmembrane segment at 137–157 (TKMSTQVCIQLLVGSYIGGFL) threads the bilayer. At 158-199 (NASSFLLSFFPLLFCGPNRVNHYSCDLTPLIELSCSGSNVPI) the chain is on the extracellular side. Residues 200–220 (VPASFCSAFVIIVTVSVIAIS) form a helical membrane-spanning segment. Topologically, residues 221–240 (YTYILITILKMRSTEGRQKA) are cytoplasmic. A helical membrane pass occupies residues 241–261 (FSTCTSHLTAVTLYYGTVTFI). Over 262–274 (YVMPKSSYSTDQN) the chain is Extracellular. Residues 275 to 295 (KVVSVFYTVVIPMLNPIIYSL) form a helical membrane-spanning segment. Residues 296–314 (RNNEIKGALKRQLARKIFS) are Cytoplasmic-facing.

Belongs to the G-protein coupled receptor 1 family.

The protein localises to the cell membrane. In terms of biological role, potential odorant receptor. The polypeptide is Olfactory receptor 5P51 (Mus musculus (Mouse)).